The following is a 162-amino-acid chain: MRRAACPGSFDPITNGHLDIIVRASRLFDEVVVAVSINKNKVTLFTVDERMELIREALRDHPMAPSNVLVDASHGLIVDFCRSRGIQSIVKGLRAVSDFDYELQMAQMNNSLAGVETLFMSTNPQYAFLSSSLVKEVARYGGDVSGLVPDVVLKQLRERLAQ.

S9 contributes to the substrate binding site. Residues 9 to 10 and H17 contribute to the ATP site; that span reads SF. Substrate-binding residues include K41, I77, and K91. Residues 92-94, E102, and 126-132 each bind ATP; these read GLR and YAFLSSS.

This sequence belongs to the bacterial CoaD family. In terms of assembly, homohexamer. Mg(2+) is required as a cofactor.

It is found in the cytoplasm. The enzyme catalyses (R)-4'-phosphopantetheine + ATP + H(+) = 3'-dephospho-CoA + diphosphate. It functions in the pathway cofactor biosynthesis; coenzyme A biosynthesis; CoA from (R)-pantothenate: step 4/5. In terms of biological role, reversibly transfers an adenylyl group from ATP to 4'-phosphopantetheine, yielding dephospho-CoA (dPCoA) and pyrophosphate. This is Phosphopantetheine adenylyltransferase from Frankia casuarinae (strain DSM 45818 / CECT 9043 / HFP020203 / CcI3).